A 193-amino-acid polypeptide reads, in one-letter code: Activity-regulated cytoskeleton associated protein 2 (193 aa).

It belongs to the ARC/ARG3.1 family. Homooligomer; homooligomerizes into virion-like capsids.

It localises to the extracellular vesicle membrane. Functionally, self-assembles into virion-like capsids that encapsulate RNAs and mediate intercellular RNA transfer. Arc2 protein is released from cells in extracellular vesicles that mediate the transfer of mRNA into neighboring cells. This chain is Activity-regulated cytoskeleton associated protein 2, found in Drosophila melanogaster (Fruit fly).